A 562-amino-acid polypeptide reads, in one-letter code: Apical membrane antigen 1 (562 aa).

A signal peptide spans 1-21; sequence MNKIYCILFLSAQCLVHMGKC. Residues 22–484 are Extracellular-facing; sequence EPNQKPSRLT…QYAQGESKNQ (463 aa). N-linked (GlcNAc...) asparagine glycosylation is found at Asn84 and Asn176. Cystine bridges form between Cys94-Cys247, Cys162-Cys192, Cys208-Cys220, Cys265-Cys363, Cys282-Cys354, Cys388-Cys444, Cys432-Cys449, and Cys434-Cys451. Residue Asn226 is glycosylated (N-linked (GlcNAc...) asparagine). N-linked (GlcNAc...) asparagine glycans are attached at residues Asn405 and Asn441. Residues 485-507 form a helical membrane-spanning segment; sequence MLLIIIGITGGVCVVALASMFYF. Over 508-562 the chain is Cytoplasmic; that stretch reads RKKAHNDKYDKMEQADGYGKPTTRKDEMLDPEASFWGEEKRASHTTPVLMEKPYY. Residues 519-543 form a disordered region; sequence MEQADGYGKPTTRKDEMLDPEASFW.

It belongs to the apicomplexan parasites AMA1 family.

The protein resides in the membrane. Functionally, involved in parasite invasion of erythrocytes. The sequence is that of Apical membrane antigen 1 (AMA-1) from Plasmodium fragile.